The following is an 808-amino-acid chain: Phospholipase D alpha 1 (808 aa).

The C2 domain maps to 1-125; that stretch reads MAQILLHGTL…LEGEEIDKWV (125 aa). Asp186 serves as a coordination point for Ca(2+). One can recognise a PLD phosphodiesterase 1 domain in the interval 326-364; that stretch reads TMFTHHQKIVVVDSELPSGESEKRRILSFVGGIDLCDGR. Residues His331, Lys333, and Asp338 contribute to the active site. Residue His331 coordinates a 1,2-diacyl-sn-glycero-3-phosphate. Positions 370 and 404 each coordinate Ca(2+). Gln520 and His659 together coordinate a 1,2-diacyl-sn-glycero-3-phosphate. Residues 654-681 enclose the PLD phosphodiesterase 2 domain; the sequence is FMIYVHSKMMIVDDEYIIVGSANINQRS. Residues His659, Lys661, and Asp666 contribute to the active site. Ca(2+) is bound at residue Glu720.

Belongs to the phospholipase D family. C2-PLD subfamily. Ca(2+) serves as cofactor.

It catalyses the reaction a 1,2-diacyl-sn-glycero-3-phosphocholine + H2O = a 1,2-diacyl-sn-glycero-3-phosphate + choline + H(+). Functionally, hydrolyzes glycerol-phospholipids at the terminal phosphodiesteric bond. Plays an important role in various cellular processes. This chain is Phospholipase D alpha 1 (PLD1), found in Nicotiana tabacum (Common tobacco).